A 162-amino-acid chain; its full sequence is CASP-like protein 0U1 (162 aa).

The Cytoplasmic portion of the chain corresponds to M1–R11. Residues F12–Y32 traverse the membrane as a helical segment. Residues L33–Y43 are Extracellular-facing. The chain crosses the membrane as a helical span at residues L44 to C64. At G65–P69 the chain is on the cytoplasmic side. A helical transmembrane segment spans residues P70–V90. The Extracellular portion of the chain corresponds to T91–A123. N-linked (GlcNAc...) asparagine glycosylation occurs at N96. A helical membrane pass occupies residues A124 to F144. Residues R145–V162 are Cytoplasmic-facing.

Belongs to the Casparian strip membrane proteins (CASP) family. In terms of assembly, homodimer and heterodimers.

The protein resides in the cell membrane. This Chlorokybus atmophyticus (Soil alga) protein is CASP-like protein 0U1.